The sequence spans 843 residues: Translation initiation factor IF-2 (843 aa).

The interval 198-219 (YKREEEEKKSKAKKAGGKGFKK) is disordered. Residues 207–219 (SKAKKAGGKGFKK) are compositionally biased toward basic residues. Positions 345–512 (SRAPVVTIMG…AVLLQSEVLE (168 aa)) constitute a tr-type G domain. The G1 stretch occupies residues 354-361 (GHVDHGKT). 354-361 (GHVDHGKT) lines the GTP pocket. Residues 379 to 383 (GITQH) are G2. Positions 400–403 (DTPG) are G3. Residues 400 to 404 (DTPGH) and 454 to 457 (NKID) each bind GTP. A G4 region spans residues 454-457 (NKID). The tract at residues 490–492 (SAK) is G5.

The protein belongs to the TRAFAC class translation factor GTPase superfamily. Classic translation factor GTPase family. IF-2 subfamily.

It localises to the cytoplasm. Functionally, one of the essential components for the initiation of protein synthesis. Protects formylmethionyl-tRNA from spontaneous hydrolysis and promotes its binding to the 30S ribosomal subunits. Also involved in the hydrolysis of GTP during the formation of the 70S ribosomal complex. The sequence is that of Translation initiation factor IF-2 from Francisella tularensis subsp. tularensis (strain WY96-3418).